A 259-amino-acid polypeptide reads, in one-letter code: 2-oxoglutaramate amidase (259 aa).

In terms of domain architecture, CN hydrolase spans 3 to 238 (WTISCLQFDI…EGIVRAEIDL (236 aa)). The active-site Proton acceptor is Glu-42. The active-site Proton donor is Lys-111. Residue Cys-145 is the Nucleophile of the active site.

The protein belongs to the carbon-nitrogen hydrolase superfamily. NIT1/NIT2 family.

It carries out the reaction 2-oxoglutaramate + H2O = 2-oxoglutarate + NH4(+). Functionally, involved in the methylthioribose (MTR) recycling pathway. Probably catalyzes the conversion of 2-oxoglutaramate to 2-oxoglutarate. In Bacillus subtilis (strain 168), this protein is 2-oxoglutaramate amidase.